Here is a 1607-residue protein sequence, read N- to C-terminus: Thrombospondin type-1 domain-containing protein 7B (1607 aa).

The first 31 residues, 1-31 (MFLRSDLAVTHWVSRSMRKLFLVLSLLLSQA), serve as a signal peptide directing secretion. Topologically, residues 32–1556 (AHLEGRKDNQ…QPLDPDGRVK (1525 aa)) are extracellular. TSP type-1 domains follow at residues 40 to 98 (NQFL…RVCD), 102 to 177 (DLFQ…IPCP), 179 to 233 (DCVV…VSCP), 336 to 392 (DCET…IAEG), 399 to 482 (PRYS…VPCS), 484 to 543 (DCIV…PMCH), 601 to 661 (DCVV…HSCT), 662 to 735 (QLYW…LPCK), 737 to 796 (DCLV…SLCP), 797 to 869 (SYRW…IPCR), 871 to 924 (DCTF…CPCD), 925 to 999 (TFMS…IPCP), 1001 to 1126 (DCKL…LLCP), 1128 to 1182 (ECVM…ENCF), 1183 to 1246 (QFQY…VECV), 1248 to 1303 (NCQL…TPCY), 1304 to 1369 (SWVL…VPCP), and 1371 to 1432 (DCHI…GKCY). N-linked (GlcNAc...) asparagine glycosylation is found at N150 and N219. 3 disulfides stabilise this stretch: C411–C477, C431–C481, and C442–C466. 3 cysteine pairs are disulfide-bonded: C602–C643, C613–C617, and C655–C660. N-linked (GlcNAc...) asparagine glycosylation occurs at N683. 3 disulfide bridges follow: C738–C779, C749–C753, and C789–C795. Residue N757 is glycosylated (N-linked (GlcNAc...) asparagine). Residue N842 is glycosylated (N-linked (GlcNAc...) asparagine). N933 is a glycosylation site (N-linked (GlcNAc...) asparagine). Intrachain disulfides connect C937–C994, C960–C998, C971–C984, C1002–C1039, and C1013–C1017. N985 carries an N-linked (GlcNAc...) asparagine glycan. N-linked (GlcNAc...) asparagine glycosylation is present at N1105. Cysteines 1121 and 1125 form a disulfide. N-linked (GlcNAc...) asparagine glycosylation is found at N1187 and N1199. Cystine bridges form between C1249–C1287, C1260–C1264, and C1297–C1302. N1309 and N1335 each carry an N-linked (GlcNAc...) asparagine glycan. Cystine bridges form between C1372-C1416, C1383-C1387, and C1426-C1431. N1457 and N1525 each carry an N-linked (GlcNAc...) asparagine glycan. The chain crosses the membrane as a helical span at residues 1557–1577 (MWVYGVSGGSFLIMIFLVFTS). Over 1578 to 1607 (YLVCKKPKPHQSTPRHQKPLTLAYDGDLDM) the chain is Cytoplasmic.

Its subcellular location is the membrane. This Mus musculus (Mouse) protein is Thrombospondin type-1 domain-containing protein 7B.